The primary structure comprises 354 residues: Caffeic acid 3-O-methyltransferase (354 aa).

121–127 is a binding site for substrate; that stretch reads MNQDKVL. The segment at 153–171 is substrate binding; the sequence is AFEYHGKDQRFNKVFNSGM. 5 residues coordinate S-adenosyl-L-methionine: glycine 199, aspartate 222, aspartate 242, methionine 243, and lysine 256. The Proton acceptor role is filled by histidine 260.

Belongs to the class I-like SAM-binding methyltransferase superfamily. Cation-independent O-methyltransferase family. COMT subfamily. As to quaternary structure, homodimer.

The catalysed reaction is (E)-caffeate + S-adenosyl-L-methionine = (E)-ferulate + S-adenosyl-L-homocysteine + H(+). It participates in aromatic compound metabolism; phenylpropanoid biosynthesis. Catalyzes the conversion of caffeic acid to ferulic acid and of 5-hydroxyferulic acid to sinapic acid. The resulting products may subsequently be converted to the corresponding alcohols that are incorporated into lignins. In Zinnia elegans (Garden zinnia), this protein is Caffeic acid 3-O-methyltransferase.